Consider the following 275-residue polypeptide: Large ribosomal subunit protein uL2c (275 aa).

A disordered region spans residues 224-275; it reads AMNPVDHPHGGGEGRTPIGRKKPVTPWGYSALGKKSRKRNRYSDASILRRRE.

The protein belongs to the universal ribosomal protein uL2 family. Part of the 50S ribosomal subunit.

It is found in the plastid. The protein localises to the chloroplast. The protein is Large ribosomal subunit protein uL2c (rpl2) of Picea abies (Norway spruce).